Consider the following 255-residue polypeptide: High-affinity branched-chain amino acid transport ATP-binding protein LivG (255 aa).

The ABC transporter domain occupies 6 to 254 (LSVNGLMMRF…PDVIRAYLGE (249 aa)). Position 38-45 (38-45 (GPNGAGKT)) interacts with ATP.

It belongs to the ABC transporter superfamily.

Component of the leucine-specific transport system. The chain is High-affinity branched-chain amino acid transport ATP-binding protein LivG (livG) from Escherichia coli O157:H7.